The primary structure comprises 546 residues: Probable protein kinase UbiB (546 aa).

One can recognise a Protein kinase domain in the interval 123-501; that stretch reads DFDETPLASA…SRRQGQARYL (379 aa). ATP is bound by residues 129 to 137 and K152; that span reads LASASIAQV. The Proton acceptor role is filled by D287. 2 consecutive transmembrane segments (helical) span residues 498 to 517 and 522 to 541; these read ARYLLGVGASLLLAGVFLLT and IEWGQISLAGAGLCWLLGWL.

Belongs to the ABC1 family. UbiB subfamily.

It localises to the cell inner membrane. Its pathway is cofactor biosynthesis; ubiquinone biosynthesis [regulation]. In terms of biological role, is probably a protein kinase regulator of UbiI activity which is involved in aerobic coenzyme Q (ubiquinone) biosynthesis. This is Probable protein kinase UbiB from Aeromonas hydrophila subsp. hydrophila (strain ATCC 7966 / DSM 30187 / BCRC 13018 / CCUG 14551 / JCM 1027 / KCTC 2358 / NCIMB 9240 / NCTC 8049).